Reading from the N-terminus, the 591-residue chain is Aspartate--tRNA(Asp/Asn) ligase (591 aa).

Glu175 is a binding site for L-aspartate. Residues Gln199–Lys202 are aspartate. The L-aspartate site is built by Arg221 and His453. ATP is bound at residue Arg221 to Glu223. Glu486 is an ATP binding site. Arg493 contacts L-aspartate. Gly538–Arg541 contacts ATP.

It belongs to the class-II aminoacyl-tRNA synthetase family. Type 1 subfamily. In terms of assembly, homodimer.

The protein resides in the cytoplasm. It carries out the reaction tRNA(Asx) + L-aspartate + ATP = L-aspartyl-tRNA(Asx) + AMP + diphosphate. Aspartyl-tRNA synthetase with relaxed tRNA specificity since it is able to aspartylate not only its cognate tRNA(Asp) but also tRNA(Asn). Reaction proceeds in two steps: L-aspartate is first activated by ATP to form Asp-AMP and then transferred to the acceptor end of tRNA(Asp/Asn). In Roseobacter denitrificans (strain ATCC 33942 / OCh 114) (Erythrobacter sp. (strain OCh 114)), this protein is Aspartate--tRNA(Asp/Asn) ligase.